The following is a 511-amino-acid chain: mRNA export factor (511 aa).

Residues 1–15 show a composition bias toward low complexity; sequence MATDIDMLIDLGLDL. Residues 1–244 are disordered; sequence MATDIDMLID…ERKAPAADTI (244 aa). A Nuclear export signal motif is present at residues 5–17; sequence IDMLIDLGLDLSD. 2 positions are modified to phosphoserine; by host: Ser16 and Ser18. Composition is skewed to acidic residues over residues 16–26 and 35–51; these read SDSDLDEDPPE and LESD…EDME. Residues 104 to 112 are interaction with host ALYREF; that stretch reads VWSRLGARR. The short motif at 110-138 is the Nuclear localization signal element; it reads ARRPSCSPEQHGGKVARLQPPPTKAQPAR. Ser114 is modified (phosphoserine; by host). Arg138 carries the dimethylated arginine; by host modification. Residues 138 to 152 are RGG-box; the sequence is RGGRRGRRRGRGRGG. Residues 139–149 are compositionally biased toward basic residues; that stretch reads GGRRGRRRGRG. The residue at position 148 (Arg148) is an Omega-N-methylarginine; by host. Arg150 carries the dimethylated arginine; by host modification. The span at 213–232 shows a compositional bias: pro residues; it reads APPPLMTLAIAPPPADPRAP. Cys399, His478, Cys482, and Cys487 together coordinate Zn(2+). A CHC2-type zinc finger spans residues 399–487; sequence CYLKARGLCG…HRQECSSRVC (89 aa).

The protein belongs to the HHV-1 ICP27 protein family. As to quaternary structure, interacts with host RBP1; this interaction facilitates the RNA polymerase recruitment to viral transcription sites. Interacts (via the RGG box) with host ALYREF/THOC4; this interaction recruits ALYREF to viral replication compartments and probably directs viral mRNA to the TAP/NFX1 pathway. Interacts (via the RGG box) with host SRPK1; this interaction relocalizes SRPK1 to the nucleus and seems to alter its activity. Interacts with ICP4; this interaction modulates ICP4 DNA-binding activity. Interacts with host NXF1; this interaction allows efficient export of HSV-1 early and late transcripts. In terms of processing, methylated within the RGG box possibly by host PRMT1. When hypomethylated, ICP27 is exported to the cytoplasm earlier and more rapidly. Phosphorylated.

The protein localises to the host cytoplasm. The protein resides in the host nucleus. Multifunctional regulator of the expression of viral genes that contributes to the shutoff of host protein synthesis and mediates nuclear export of viral intronless mRNAs. Early in infection, this immediate early (EI) protein mediates the inhibition of cellular splicing. This results in the accumulation of unprocessed 3'end pre-mRNAs which can't be exported from the nucleus. Cellular protein synthesis is thereby shut off early after virus infection. Later in the infection, it helps recruit cellular RNA polymerase II to viral replication sites and promotes the nuclear export of viral intronless mRNAs by interacting with mRNAs and host NXF1/TAP. ICP27 binds to NUP62 which may provide facilitated viral mRNA export and may compete with some host cell transport receptors for binding and inhibit cellular nucleocytoplasmic transport pathways. Also stimulates translation of viral transcripts. Repression of host gene expression blocks the cell cycle at the G1 phase and prevents apoptosis. Seems to silence the 3' splice site of the promyelocytic leukemia (PML) intron 7a, thereby switching PML isoforms from PML-II to PML-V. This could be linked to the accelerated mRNA export induced by ICP27 which might not provide sufficient time for PML pre-mRNA to be spliced in the nucleus. This Human herpesvirus 1 (strain HFEM) (HHV-1) protein is mRNA export factor.